Reading from the N-terminus, the 366-residue chain is Acetylserotonin O-methyltransferase 3 (366 aa).

S-adenosyl-L-homocysteine contacts are provided by Gly209, Asp232, Asp253, and Lys267. His271 acts as the Proton acceptor in catalysis. Active-site residues include Glu302 and Glu332.

The protein belongs to the class I-like SAM-binding methyltransferase superfamily. Cation-independent O-methyltransferase family. As to quaternary structure, homodimer. In terms of tissue distribution, expressed at low levels in roots, shoots, leaves, stems and flowers.

The protein resides in the cytoplasm. It catalyses the reaction N-acetylserotonin + S-adenosyl-L-methionine = melatonin + S-adenosyl-L-homocysteine + H(+). The protein operates within aromatic compound metabolism; melatonin biosynthesis; melatonin from serotonin: step 1/2. Its function is as follows. Methyltransferase which catalyzes the transfer of a methyl group onto N-acetylserotonin, producing melatonin (N-acetyl-5-methoxytryptamine). This is Acetylserotonin O-methyltransferase 3 from Oryza sativa subsp. japonica (Rice).